The chain runs to 239 residues: MQKHDLLYSGKAKSVYATDNPTQIIMHYNDDATAGNGAKHAVIADKGILNNQITTLIFKVLKAADIPTHHIETLNDREQLCQKVTIFPLEVIVRNTVAGSMAKRLGMEEGTELDNVVFEICYKNDKLNDPLINDDHAVALGAASYEDLDTIYELTDKINQSLSALFAACQINLVDFKIEFGRTAAGEIVLADEISPDTCRLWDMQTNNKLDKDRFRRDLGGLTDAYREVLRRLQQLELE.

Belongs to the SAICAR synthetase family.

It carries out the reaction 5-amino-1-(5-phospho-D-ribosyl)imidazole-4-carboxylate + L-aspartate + ATP = (2S)-2-[5-amino-1-(5-phospho-beta-D-ribosyl)imidazole-4-carboxamido]succinate + ADP + phosphate + 2 H(+). It participates in purine metabolism; IMP biosynthesis via de novo pathway; 5-amino-1-(5-phospho-D-ribosyl)imidazole-4-carboxamide from 5-amino-1-(5-phospho-D-ribosyl)imidazole-4-carboxylate: step 1/2. This Dichelobacter nodosus (strain VCS1703A) protein is Phosphoribosylaminoimidazole-succinocarboxamide synthase.